The primary structure comprises 318 residues: MADILRQLLDCGKLSDETCHSILCGLGQHVDALHLSKTEEEVDGWTSEEDEELDQEYCRQVTESLGFDIDGKVCIPACGISPVFLGANKNPRSEVALYGRLGVHCFNIDKERKFQYMRIPKYNVQYPEAMSFHITVEVNDLADNSAHTLQNLVTRSFSRNGEDLRVSTGICRIKPKTPEREICLVDEEAIDKFYRGVMPNFVSKLGADDDKLRFYEVQEQDVCANDWLRLYTEFALFSYWRYNEDGFESCLPVEIKKIIVETCDTHREPRMKLKSSNAIFHINFNAKSCDYKSVSRRTTDGKPGHIVLEINTWKLSST.

Belongs to the UPF0725 (EMB2204) family.

This is UPF0725 protein At3g44770 from Arabidopsis thaliana (Mouse-ear cress).